Consider the following 78-residue polypeptide: Large ribosomal subunit protein bL28 (78 aa).

It belongs to the bacterial ribosomal protein bL28 family.

This is Large ribosomal subunit protein bL28 from Shigella boydii serotype 4 (strain Sb227).